Consider the following 446-residue polypeptide: RUN domain-containing protein 3A (446 aa).

The segment at 1 to 298 (MEASFVQTTM…LQLQLEEAAA (298 aa)) is interaction with RAP2A. One can recognise an RUN domain in the interval 52-189 (DDSSEEFVNF…IDFSFCLKGE (138 aa)). Thr-215 is modified (phosphothreonine). Residues 216–239 (DEEERHSAESSTSEDNSPEHPYLP) are disordered. Ser-232 carries the phosphoserine modification. The stretch at 267–322 (YLEELVRLRESQLKDLEAENRRLQLQLEEAAAQNQREKRELEGVILELQEQLTGLI) forms a coiled coil. Polar residues predominate over residues 372 to 384 (PLSAEASLSSDSQ). Positions 372–404 (PLSAEASLSSDSQRLGEGTRDEEPWGPIGKDPT) are disordered. 2 positions are modified to phosphoserine: Ser-416 and Ser-419.

Belongs to the RUNDC3 family. As to quaternary structure, interacts with the GTP-bound form of RAP2A.

Its function is as follows. May act as an effector of RAP2A in neuronal cells. This Homo sapiens (Human) protein is RUN domain-containing protein 3A (RUNDC3A).